The primary structure comprises 216 residues: Cytidylate kinase (216 aa).

An ATP-binding site is contributed by 7 to 15 (GPSGTGKST).

This sequence belongs to the cytidylate kinase family. Type 1 subfamily.

It localises to the cytoplasm. It carries out the reaction CMP + ATP = CDP + ADP. It catalyses the reaction dCMP + ATP = dCDP + ADP. In Chlamydia trachomatis serovar A (strain ATCC VR-571B / DSM 19440 / HAR-13), this protein is Cytidylate kinase.